Consider the following 174-residue polypeptide: 3-hydroxydecanoyl-[acyl-carrier-protein] dehydratase (174 aa).

Histidine 73 is an active-site residue.

Belongs to the thioester dehydratase family. FabA subfamily. In terms of assembly, homodimer.

Its subcellular location is the cytoplasm. It carries out the reaction a (3R)-hydroxyacyl-[ACP] = a (2E)-enoyl-[ACP] + H2O. The enzyme catalyses (3R)-hydroxydecanoyl-[ACP] = (2E)-decenoyl-[ACP] + H2O. The catalysed reaction is (2E)-decenoyl-[ACP] = (3Z)-decenoyl-[ACP]. It functions in the pathway lipid metabolism; fatty acid biosynthesis. Its function is as follows. Necessary for the introduction of cis unsaturation into fatty acids. Catalyzes the dehydration of (3R)-3-hydroxydecanoyl-ACP to E-(2)-decenoyl-ACP and then its isomerization to Z-(3)-decenoyl-ACP. Can catalyze the dehydratase reaction for beta-hydroxyacyl-ACPs with saturated chain lengths up to 16:0, being most active on intermediate chain length. The protein is 3-hydroxydecanoyl-[acyl-carrier-protein] dehydratase of Saccharophagus degradans (strain 2-40 / ATCC 43961 / DSM 17024).